The sequence spans 139 residues: ATP synthase epsilon chain (139 aa).

Belongs to the ATPase epsilon chain family. In terms of assembly, F-type ATPases have 2 components, CF(1) - the catalytic core - and CF(0) - the membrane proton channel. CF(1) has five subunits: alpha(3), beta(3), gamma(1), delta(1), epsilon(1). CF(0) has three main subunits: a, b and c.

The protein localises to the cell inner membrane. In terms of biological role, produces ATP from ADP in the presence of a proton gradient across the membrane. This is ATP synthase epsilon chain from Enterobacter sp. (strain 638).